The sequence spans 623 residues: Stretch-activated cation channel MID1 (623 aa).

The Extracellular portion of the chain corresponds to 1 to 57; sequence MPAREVYLKRPATRRQLEGICTRYDGQQRITQLDCEEGCSKRTQPPQRLNPRYKSPD. A helical membrane pass occupies residues 58–78; it reads LIHISFIIVLLCILSMTSSVV. Residues 79 to 623 are Cytoplasmic-facing; that stretch reads AQTTTGSSSS…DRWGNRWCNG (545 aa). The span at 524–536 shows a compositional bias: low complexity; sequence TSTSSGTFPTPST. A disordered region spans residues 524 to 544; sequence TSTSSGTFPTPSTVLRTPSSP. Residues 600–623 form a required for targeting to the cell membrane region; it reads SYGDGSAAQGVAAQDRWGNRWCNG.

In terms of assembly, forms an oligomer by disulfide bonds. Interacts with CCH1 to form a Ca(2+) influx channel. Interacts (via C-terminus) with CCP1/cytochrome c peroxidase; the interaction may contribute to cellular detoxification of radicals.

Its subcellular location is the cell membrane. Its function is as follows. Calcium-permeable, cation-selective stretch-activated channel (SAC) that functions together with CCH1 to mediate calcium entry into cells. May additionally play a role in cellular detoxification of radicals. This Cryptococcus neoformans var. grubii serotype A (strain H99 / ATCC 208821 / CBS 10515 / FGSC 9487) (Filobasidiella neoformans var. grubii) protein is Stretch-activated cation channel MID1.